A 424-amino-acid polypeptide reads, in one-letter code: Serine--tRNA ligase (424 aa).

Residue 231-233 participates in L-serine binding; it reads TAE. Residue 262-264 coordinates ATP; that stretch reads RSE. Residue Glu285 coordinates L-serine. Position 349–352 (349–352) interacts with ATP; that stretch reads EISS. Ser385 contacts L-serine.

The protein belongs to the class-II aminoacyl-tRNA synthetase family. Type-1 seryl-tRNA synthetase subfamily. As to quaternary structure, homodimer. The tRNA molecule binds across the dimer.

It localises to the cytoplasm. It catalyses the reaction tRNA(Ser) + L-serine + ATP = L-seryl-tRNA(Ser) + AMP + diphosphate + H(+). The catalysed reaction is tRNA(Sec) + L-serine + ATP = L-seryl-tRNA(Sec) + AMP + diphosphate + H(+). It participates in aminoacyl-tRNA biosynthesis; selenocysteinyl-tRNA(Sec) biosynthesis; L-seryl-tRNA(Sec) from L-serine and tRNA(Sec): step 1/1. Its function is as follows. Catalyzes the attachment of serine to tRNA(Ser). Is also able to aminoacylate tRNA(Sec) with serine, to form the misacylated tRNA L-seryl-tRNA(Sec), which will be further converted into selenocysteinyl-tRNA(Sec). In Bacillus cytotoxicus (strain DSM 22905 / CIP 110041 / 391-98 / NVH 391-98), this protein is Serine--tRNA ligase.